We begin with the raw amino-acid sequence, 346 residues long: Sulfate/thiosulfate import ATP-binding protein CysA 1 (346 aa).

Residues 3–237 enclose the ABC transporter domain; sequence VKVSGITKQF…PNSPFVFSFI (235 aa). ATP is bound at residue 35 to 42; it reads GPSGSGKT.

This sequence belongs to the ABC transporter superfamily. Sulfate/tungstate importer (TC 3.A.1.6) family. As to quaternary structure, the complex is composed of two ATP-binding proteins (CysA), two transmembrane proteins (CysT and CysW) and a solute-binding protein (CysP).

It is found in the cell inner membrane. It carries out the reaction sulfate(out) + ATP + H2O = sulfate(in) + ADP + phosphate + H(+). The catalysed reaction is thiosulfate(out) + ATP + H2O = thiosulfate(in) + ADP + phosphate + H(+). Part of the ABC transporter complex CysAWTP involved in sulfate/thiosulfate import. Responsible for energy coupling to the transport system. The polypeptide is Sulfate/thiosulfate import ATP-binding protein CysA 1 (Agrobacterium fabrum (strain C58 / ATCC 33970) (Agrobacterium tumefaciens (strain C58))).